Here is a 479-residue protein sequence, read N- to C-terminus: PTS system MurNAc-GlcNAc-specific EIIBC component (479 aa).

One can recognise a PTS EIIB type-1 domain in the interval 5–87 (QILAEHIIDA…SELSGAPLGE (83 aa)). Cys27 functions as the Phosphocysteine intermediate; for EIIB activity in the catalytic mechanism. Residues 125–479 (KTIANIFIPL…AMRESDTLGD (355 aa)) form the PTS EIIC type-1 domain. Helical transmembrane passes span 130–150 (IFIPLIPAFIGAGLIGGIAAV), 169–189 (VTVFNVIKDGMLAYLAIFTGI), 195–215 (FGATPGLGGVIGGTTLLTGLT), 229–249 (LQPGQGGIIGVIFAVWLLSII), 269–289 (ITLFIIGLLTIFIFMPLAGFV), 303–323 (IGGVFSGFIIGAFFLPLVMLG), 344–364 (LLPIAAMAGAGQVGAALALWV), 379–399 (ALPVGFLGIGEPLIYGVTLPL), 403–423 (FITACIGGGIGGAVIGGIGHI), and 445–465 (LGYIAGLLVAYAGGFIFTYFF).

The protein localises to the cell membrane. The enzyme catalyses N-acetyl-beta-D-muramate-(1-&gt;4)-N-acetyl-D-glucosamine(out) + N(pros)-phospho-L-histidyl-[protein] = 6-phospho-N-acetyl-beta-D-muramate-(1-&gt;4)-N-acetyl-D-glucosamine(in) + L-histidyl-[protein]. The protein operates within cell wall biogenesis; peptidoglycan recycling. In terms of biological role, the phosphoenolpyruvate-dependent sugar phosphotransferase system (sugar PTS), a major carbohydrate active transport system, catalyzes the phosphorylation of incoming sugar substrates concomitantly with their translocation across the cell membrane. This system is involved in the uptake and phosphorylation of MurNAc-GlcNAc, the principle peptidoglycan turnover product of S.aureus, yielding cytoplasmic MurNAc 6P-GlcNAc. The sequence is that of PTS system MurNAc-GlcNAc-specific EIIBC component from Staphylococcus saprophyticus subsp. saprophyticus (strain ATCC 15305 / DSM 20229 / NCIMB 8711 / NCTC 7292 / S-41).